A 258-amino-acid chain; its full sequence is MTVAVFFGCTFIAFGPAIALFMFTIARDPLRVIFLIAGAFFWLVSLLLSSLVWFITVQISNKNSATQQRGLLIFGVVLSVLLQEAFRYGYYRLLKKANEGLLALSQEDTMPISMRQLAYVSGLGFGFMSGAFSVVNILSDSLGPGTVGIHGESQHYFISSAFMTLAIILLHMFWGVVFFEACERQRWWALGAVVASHLVVSCLTFVNPHYQGSLIPTYIILSVMAVWAYLCAGGSLRNLKLCLTCKDKDFLLANHRPR.

7 helical membrane-spanning segments follow: residues 3-23, 32-52, 70-90, 118-138, 161-181, 187-207, and 214-234; these read VAVF…LFMF, VIFL…SSLV, GLLI…RYGY, AYVS…VNIL, AFMT…FFEA, WWAL…TFVN, and LIPT…CAGG.

This sequence belongs to the APH-1 family. As to quaternary structure, component of the gamma-secretase complex, a complex composed of a presenilin homodimer (PSEN1 or PSEN2), nicastrin (NCSTN), APH1 and PEN2.

Its subcellular location is the membrane. Essential subunit of the gamma-secretase complex, an endoprotease complex that catalyzes the intramembrane cleavage of integral proteins such as Notch receptors. It may represent a stabilizing cofactor for the presenilin homodimer that promotes the formation of a stable complex. In Danio rerio (Zebrafish), this protein is Gamma-secretase subunit Aph-1b (aph1b).